The chain runs to 358 residues: Chorismate synthase (358 aa).

Arg47 is a binding site for NADP(+). Residues 124-126, 240-241, Gly284, 299-303, and Arg325 contribute to the FMN site; these read RSS, NA, and KPVAT.

It belongs to the chorismate synthase family. In terms of assembly, homotetramer. FMNH2 is required as a cofactor.

It catalyses the reaction 5-O-(1-carboxyvinyl)-3-phosphoshikimate = chorismate + phosphate. It functions in the pathway metabolic intermediate biosynthesis; chorismate biosynthesis; chorismate from D-erythrose 4-phosphate and phosphoenolpyruvate: step 7/7. Catalyzes the anti-1,4-elimination of the C-3 phosphate and the C-6 proR hydrogen from 5-enolpyruvylshikimate-3-phosphate (EPSP) to yield chorismate, which is the branch point compound that serves as the starting substrate for the three terminal pathways of aromatic amino acid biosynthesis. This reaction introduces a second double bond into the aromatic ring system. This Bacteroides fragilis (strain YCH46) protein is Chorismate synthase.